The primary structure comprises 282 residues: Pantothenate synthetase (282 aa).

An ATP-binding site is contributed by 30 to 37 (MGFLHDGH). The Proton donor role is filled by His37. Gln60 contributes to the (R)-pantoate binding site. Gln60 provides a ligand contact to beta-alanine. 146-149 (GQKD) contributes to the ATP binding site. (R)-pantoate is bound at residue Gln152. Residues Ile175 and 183–186 (KSSR) each bind ATP.

The protein belongs to the pantothenate synthetase family. In terms of assembly, homodimer.

It is found in the cytoplasm. It catalyses the reaction (R)-pantoate + beta-alanine + ATP = (R)-pantothenate + AMP + diphosphate + H(+). It functions in the pathway cofactor biosynthesis; (R)-pantothenate biosynthesis; (R)-pantothenate from (R)-pantoate and beta-alanine: step 1/1. Functionally, catalyzes the condensation of pantoate with beta-alanine in an ATP-dependent reaction via a pantoyl-adenylate intermediate. The chain is Pantothenate synthetase from Campylobacter jejuni (strain RM1221).